The chain runs to 333 residues: Ephrin-B2 (333 aa).

The first 27 residues, 1–27 (MAVRRDSVWKYCWGVLMVLCRTAISKS), serve as a signal peptide directing secretion. The Ephrin RBD domain occupies 28–164 (IVLEPIYWNS…TRAMKILMKV (137 aa)). Residues 28–229 (IVLEPIYWNS…ILGSEVALFA (202 aa)) lie on the Extracellular side of the membrane. N-linked (GlcNAc...) asparagine glycosylation occurs at asparagine 36. 2 disulfides stabilise this stretch: cysteine 62–cysteine 101 and cysteine 89–cysteine 153. Asparagine 139 carries N-linked (GlcNAc...) asparagine glycosylation. The segment at 165–213 (GQDASSAGSTRNKDPTRRPELEAGTNGRSSTTSPFVKPNPGSSTDGNSA) is disordered. Residues 175 to 185 (RNKDPTRRPEL) show a composition bias toward basic and acidic residues. Residues 190-213 (NGRSSTTSPFVKPNPGSSTDGNSA) are compositionally biased toward polar residues. Residues 230-250 (GIASGCIIFIVIIITLVVLLL) traverse the membrane as a helical segment. Over 251–333 (KYRRRHRKHS…QSPANIYYKV (83 aa)) the chain is Cytoplasmic. Position 260 is a phosphoserine (serine 260). A Phosphothreonine modification is found at threonine 274. Arginine 277 bears the Omega-N-methylarginine mark. The short motif at 331 to 333 (YKV) is the PDZ-binding element.

This sequence belongs to the ephrin family. In terms of assembly, interacts with PDZRN3. Binds to the receptor tyrosine kinases EPHA4, EPHB4 and EPHA3. (Microbial infection) Interacts with Hendra virus and Nipah virus G protein. In terms of processing, inducible phosphorylation of tyrosine residues in the cytoplasmic domain. Lung and kidney.

The protein resides in the cell membrane. Its subcellular location is the cell junction. It is found in the adherens junction. Its function is as follows. Cell surface transmembrane ligand for Eph receptors, a family of receptor tyrosine kinases which are crucial for migration, repulsion and adhesion during neuronal, vascular and epithelial development. Binds promiscuously Eph receptors residing on adjacent cells, leading to contact-dependent bidirectional signaling into neighboring cells. The signaling pathway downstream of the receptor is referred to as forward signaling while the signaling pathway downstream of the ephrin ligand is referred to as reverse signaling. Binds to receptor tyrosine kinase including EPHA4, EPHA3 and EPHB4. Together with EPHB4 plays a central role in heart morphogenesis and angiogenesis through regulation of cell adhesion and cell migration. EPHB4-mediated forward signaling controls cellular repulsion and segregation from EFNB2-expressing cells. May play a role in constraining the orientation of longitudinally projecting axons. (Microbial infection) Acts as a receptor for Hendra virus and Nipah virus. The polypeptide is Ephrin-B2 (EFNB2) (Homo sapiens (Human)).